We begin with the raw amino-acid sequence, 539 residues long: MSSTEVPGEVSTSVSSYFDTILILDFGSQYSHLIARRLREIHVYAELLPCTQKIEALPFKPIGVILSGGPYSVYDDIAPHVDPAVFELGVPVLGICYGMQEIAWLNGRCVEPGIEREYGPATVSMEPEIKTEVFKSFFNSMPKEFEVWMSHGDRLSALPNGYETIGRTKNSPFAVIAHVTKPIIGLQFHPEVTHTPLGLQLIKNFAIEICHAKPNWSMENFVDKEILRIRKMIGPSDHVIGAVSGGVDSTVASKVLKEAIGDRFHAIMVDNGLLRLNEAEIVRETLNKHLGIQLTVVDASEEFIGKLKGVTDPEKKRKIIGNTFIHVFEREAERIVKETNGKVEYLLQGTLYPDVIESISFKGPSQTIKTHHNVGGLLKDMKLKLIEPLRELFKDEVRALGELLGIEHSLVWRHPFPGPGLGIRILGEVNAAQLEIARKADHIFITEIRNHGYYDKISQAFAALLPVKAVGVMGDKRTHEQVIALRAITTSDFMTADWYDGFSIKFLKLVSSRICNEVSGVNRVLYDISSKPPATVEME.

The 196-residue stretch at 20-215 (TILILDFGSQ…AIEICHAKPN (196 aa)) folds into the Glutamine amidotransferase type-1 domain. Cys-96 serves as the catalytic Nucleophile. Catalysis depends on residues His-189 and Glu-191. Residues 216 to 413 (WSMENFVDKE…LGIEHSLVWR (198 aa)) form the GMPS ATP-PPase domain. Position 244-250 (244-250 (SGGVDST)) interacts with ATP. Residues Arg-317, Asp-475, Lys-531, and Glu-537 each coordinate XMP.

Homodimer. The cofactor is Mg(2+).

The protein resides in the cytoplasm. Its subcellular location is the cytosol. It carries out the reaction XMP + L-glutamine + ATP + H2O = GMP + L-glutamate + AMP + diphosphate + 2 H(+). The protein operates within purine metabolism; GMP biosynthesis; GMP from XMP (L-Gln route): step 1/1. Functionally, catalyzes the conversion of xanthine monophosphate (XMP) to GMP in the presence of glutamine and ATP through an adenyl-XMP intermediate. The chain is GMP synthase [glutamine-hydrolyzing] from Schizosaccharomyces pombe (strain 972 / ATCC 24843) (Fission yeast).